The following is a 91-amino-acid chain: DNA-directed RNA polymerase subunit omega (91 aa).

This sequence belongs to the RNA polymerase subunit omega family. In terms of assembly, the RNAP catalytic core consists of 2 alpha, 1 beta, 1 beta' and 1 omega subunit. When a sigma factor is associated with the core the holoenzyme is formed, which can initiate transcription.

The catalysed reaction is RNA(n) + a ribonucleoside 5'-triphosphate = RNA(n+1) + diphosphate. In terms of biological role, promotes RNA polymerase assembly. Latches the N- and C-terminal regions of the beta' subunit thereby facilitating its interaction with the beta and alpha subunits. This chain is DNA-directed RNA polymerase subunit omega, found in Erwinia tasmaniensis (strain DSM 17950 / CFBP 7177 / CIP 109463 / NCPPB 4357 / Et1/99).